We begin with the raw amino-acid sequence, 83 residues long: MNYLVMISLALLLMIGVESKRDGYIVYPNNCVYHCVPPCDGLCKKNGGSSGSCSFLVPSGLACWCKDLPDNVPIKDTSRKCTR.

A signal peptide spans 1–19; sequence MNYLVMISLALLLMIGVES. One can recognise an LCN-type CS-alpha/beta domain in the interval 21–82; the sequence is RDGYIVYPNN…PIKDTSRKCT (62 aa). Cystine bridges form between Cys31/Cys81, Cys35/Cys53, Cys39/Cys63, and Cys43/Cys65. A propeptide (removed by a carboxypeptidase (in neurotoxin-1/1')) is located at residue Arg83.

This sequence belongs to the long (4 C-C) scorpion toxin superfamily. Sodium channel inhibitor family. Alpha subfamily. In terms of tissue distribution, expressed by the venom gland.

It is found in the secreted. Functionally, alpha toxins bind voltage-independently at site-3 of sodium channels (Nav) and inhibit the inactivation of the activated channels, thereby blocking neuronal transmission. Is active against mammals and binds with high affinity rat brain synaptosomes. In Androctonus australis (Sahara scorpion), this protein is Neurotoxin-1''.